We begin with the raw amino-acid sequence, 379 residues long: Spermatogenesis-associated protein 17 (379 aa).

IQ domains follow at residues 48-77, 71-100, and 107-136; these read ENDA…VVTI, LNRV…AAYY, and YNEM…LKEY.

In terms of tissue distribution, strongly expressed in adult testis but weakly expressed in the spleen and thymus. Strongly expressed in round and elongating spermatids, and weakly or not expressed in spermatozoa.

The protein localises to the cytoplasm. The sequence is that of Spermatogenesis-associated protein 17 (Spata17) from Mus musculus (Mouse).